A 146-amino-acid chain; its full sequence is Putative pre-16S rRNA nuclease (146 aa).

Belongs to the YqgF nuclease family.

The protein resides in the cytoplasm. Functionally, could be a nuclease involved in processing of the 5'-end of pre-16S rRNA. The sequence is that of Putative pre-16S rRNA nuclease from Burkholderia thailandensis (strain ATCC 700388 / DSM 13276 / CCUG 48851 / CIP 106301 / E264).